We begin with the raw amino-acid sequence, 325 residues long: MPITRMRMRPWLEMQINSNQIPGLIWINKEEMIFQIPWKHAAKHGWDINKDACLFRSWAIHTGRYKAGEKEPDPKTWKANFRCAMNSLPDIEEVKDQSRNKGSSAVRVYRMLPPLTKNQRKERKSKSSRDAKSKAKRKSCGDSSPDTFSDGLSSSTLPDDHSSYTVPGYMQDLEVEQALTPALSPCAVSSTLPDWHIPVEVVPDSTSDLYNFQVSPMPSTSEATTDEDEEGKLPEDIMKLLEQSEWQPTNVDGKGYLLNEPGVQPTSVYGDFSCKEEPEIDSPGGDIGLSLQRVFTDLKNMDATWLDSLLTPVRLPSIQAIPCAP.

The segment at residues 5-113 (RMRMRPWLEM…SAVRVYRMLP (109 aa)) is a DNA-binding region (IRF tryptophan pentad repeat). Lys78 is subject to N6-acetyllysine. A disordered region spans residues 92-165 (EEVKDQSRNK…TLPDDHSSYT (74 aa)). Over residues 141 to 157 (GDSSPDTFSDGLSSSTL) the composition is skewed to polar residues. Residues Lys275 and Lys299 each participate in a glycyl lysine isopeptide (Lys-Gly) (interchain with G-Cter in SUMO) cross-link.

It belongs to the IRF family. As to quaternary structure, monomer. Homodimer. Interacts with EP300. Interacts with MYD88. Interacts with PIAS3. Interacts with SPOP. Post-translationally, phosphorylated by CK2 and this positively regulates its activity. Sumoylation represses the transcriptional activity and displays enhanced resistance to protein degradation. Sumoylated by UBE2I/UBC9 and SUMO1. Inactivates the tumor suppressor activity. Elevated levels in tumor cells. Major site is Lys-275. Sumoylation is enhanced by PIAS3. Desumoylated by SENP1 in tumor cells and appears to compete with ubiquitination on C-terminal sites. In terms of processing, ubiquitinated in a SPOP-depedent manner. Appears to compete with sumoylation on C-terminal sites.

The protein resides in the nucleus. It localises to the cytoplasm. Activated by MYD88. Its function is as follows. Transcriptional regulator which displays a remarkable functional diversity in the regulation of cellular responses. Regulates transcription of IFN and IFN-inducible genes, host response to viral and bacterial infections, regulation of many genes expressed during hematopoiesis, inflammation, immune responses and cell proliferation and differentiation, regulation of the cell cycle and induction of growth arrest and programmed cell death following DNA damage. Stimulates both innate and acquired immune responses through the activation of specific target genes and can act as a transcriptional activator and repressor regulating target genes by binding to an interferon-stimulated response element (ISRE) in their promoters. Has an essentail role in IFNG-dependent immunity to mycobacteria. Competes with the transcriptional repressor ZBED2 for binding to a common consensus sequence in gene promoters. Its target genes for transcriptional activation activity include: genes involved in anti-viral response, such as IFN-alpha/beta, RIGI, TNFSF10/TRAIL, ZBP1, OAS1/2, PIAS1/GBP, EIF2AK2/PKR and RSAD2/viperin; antibacterial response, such as GBP2, GBP5 and NOS2/INOS; anti-proliferative response, such as p53/TP53, LOX and CDKN1A; apoptosis, such as BBC3/PUMA, CASP1, CASP7 and CASP8; immune response, such as IL7, IL12A/B and IL15, PTGS2/COX2 and CYBB; DNA damage responses and DNA repair, such as POLQ/POLH; MHC class I expression, such as TAP1, PSMB9/LMP2, PSME1/PA28A, PSME2/PA28B and B2M and MHC class II expression, such as CIITA; metabolic enzymes, such as ACOD1/IRG1. Represses genes involved in anti-proliferative response, such as BIRC5/survivin, CCNB1, CCNE1, CDK1, CDK2 and CDK4 and in immune response, such as FOXP3, IL4, ANXA2 and TLR4. Stimulates p53/TP53-dependent transcription through enhanced recruitment of EP300 leading to increased acetylation of p53/TP53. Plays an important role in immune response directly affecting NK maturation and activity, macrophage production of IL12, Th1 development and maturation of CD8+ T-cells. Also implicated in the differentiation and maturation of dendritic cells and in the suppression of regulatory T (Treg) cells development. Acts as a tumor suppressor and plays a role not only in antagonism of tumor cell growth but also in stimulating an immune response against tumor cells. The sequence is that of Interferon regulatory factor 1 (IRF1) from Homo sapiens (Human).